Reading from the N-terminus, the 117-residue chain is Hydrogenase maturation factor HypA (117 aa).

Position 2 (His2) interacts with Ni(2+). Zn(2+) is bound by residues Cys73, Cys76, Cys90, and Cys93.

Belongs to the HypA/HybF family.

In terms of biological role, involved in the maturation of [NiFe] hydrogenases. Required for nickel insertion into the metal center of the hydrogenase. This is Hydrogenase maturation factor HypA from Pectobacterium atrosepticum (strain SCRI 1043 / ATCC BAA-672) (Erwinia carotovora subsp. atroseptica).